Here is a 183-residue protein sequence, read N- to C-terminus: Microfibrillar-associated protein 2 (183 aa).

The signal sequence occupies residues 1 to 17 (MRAASLFLLFLPAGLLA). Residue Q18 is modified to Pyrrolidone carboxylic acid. Q20 participates in a covalent cross-link: Isoglutamyl lysine isopeptide (Gln-Lys) (interchain with K-?). Residues Y47, Y48, and Y50 each carry the sulfotyrosine modification. The 31-residue stretch at 153 to 183 (CRDKFSKCGVLASSGLCQSVAAACARSCGGC) folds into the ShKT domain. 3 cysteine pairs are disulfide-bonded: C153–C183, C160–C176, and C169–C180.

It belongs to the MFAP family. In terms of assembly, forms a ternary complex with BGN and ELN. Interacts with FBN1 (via N-terminal domain) and FBN2. In terms of processing, O-glycosylated; glycans consist of Gal(beta1-3)GalNAc. Post-translationally, forms intermolecular disulfide bonds either with other MAGP-1 molecules or with other components of the microfibrils. Forms transglutaminase cross-links with tropoelastin.

The protein resides in the secreted. Its subcellular location is the extracellular space. It localises to the extracellular matrix. Functionally, component of the elastin-associated microfibrils. In Bos taurus (Bovine), this protein is Microfibrillar-associated protein 2 (MFAP2).